The following is a 187-amino-acid chain: UPF0200 protein PYRAB09750 (187 aa).

7-14 (GMPGSGKG) lines the ATP pocket.

It belongs to the UPF0200 family.

The protein is UPF0200 protein PYRAB09750 of Pyrococcus abyssi (strain GE5 / Orsay).